The sequence spans 562 residues: NAD-dependent malic enzyme (562 aa).

Y101 acts as the Proton donor in catalysis. R154 serves as a coordination point for NAD(+). K172 acts as the Proton acceptor in catalysis. A divalent metal cation contacts are provided by E243, D244, and D267. NAD(+)-binding residues include D267 and N415.

Belongs to the malic enzymes family. As to quaternary structure, homotetramer. The cofactor is Mg(2+). Mn(2+) is required as a cofactor.

The enzyme catalyses (S)-malate + NAD(+) = pyruvate + CO2 + NADH. The catalysed reaction is oxaloacetate + H(+) = pyruvate + CO2. The chain is NAD-dependent malic enzyme from Shewanella pealeana (strain ATCC 700345 / ANG-SQ1).